The sequence spans 29 residues: Potassium-transporting ATPase KdpF subunit (29 aa).

Residues 2-22 (LIGEAVLAVVTVAVVAYLTYV) traverse the membrane as a helical segment.

This sequence belongs to the KdpF family. In terms of assembly, the system is composed of three essential subunits: KdpA, KdpB and KdpC. The complex also contains KdpF, a small non-essential subunit.

The protein localises to the cell membrane. In terms of biological role, part of the high-affinity ATP-driven potassium transport (or Kdp) system, which catalyzes the hydrolysis of ATP coupled with the electrogenic transport of potassium into the cytoplasm. This subunit may be involved in stabilization of the complex. The Kdp system is essential for growth under K(+) limitation, and for survival under desiccation and salt crystal inclusion. The sequence is that of Potassium-transporting ATPase KdpF subunit from Halobacterium salinarum (strain ATCC 29341 / DSM 671 / R1).